The following is a 426-amino-acid chain: MLDIRVIRENPEEVKARLKPRSGDAWKLVDDVLACDEARRNAETEKQALQSERNATSKQIGMLKKKGEDTSSIEARVREIGDRIRELDRVAEENAAQLTSLLMNIPNLPHLECPVGADETANPEIKLWGEKPAIENPKDHVELAANLGMISFEDGARITGSGFVVYRGAGARLERALINFLLNTQTVENGYQEVGVPFVVKRECMEGTGQLPKFEEDMYGTEDQQMFLIPTAEVPVTNLYRDTILQESDLPIKMAAYTPCFRREAGSAGRINRGMIRVHQFDKVELVQILKPEDSFRELEVLRSHAESILQKLGLHYRVIELCTGDLGFSSAKTYDIEVWAPGQGQYLEVSSCSCFTDYQARRMRLRYKDADGKNQFCHTLNGSGTALPRLYVALLETYQQPDGSIRIPEALVPYFGADCIRPEQA.

The segment at Thr-44–Gly-67 is disordered. Polar residues predominate over residues Gln-47 to Gln-59. Residue Thr-231–Glu-233 coordinates L-serine. ATP-binding positions include Arg-262–Glu-264 and Val-278. Position 285 (Glu-285) interacts with L-serine. Glu-349–Ser-352 provides a ligand contact to ATP. Ser-384 lines the L-serine pocket.

This sequence belongs to the class-II aminoacyl-tRNA synthetase family. Type-1 seryl-tRNA synthetase subfamily. Homodimer. The tRNA molecule binds across the dimer.

It localises to the cytoplasm. The catalysed reaction is tRNA(Ser) + L-serine + ATP = L-seryl-tRNA(Ser) + AMP + diphosphate + H(+). The enzyme catalyses tRNA(Sec) + L-serine + ATP = L-seryl-tRNA(Sec) + AMP + diphosphate + H(+). It functions in the pathway aminoacyl-tRNA biosynthesis; selenocysteinyl-tRNA(Sec) biosynthesis; L-seryl-tRNA(Sec) from L-serine and tRNA(Sec): step 1/1. In terms of biological role, catalyzes the attachment of serine to tRNA(Ser). Is also able to aminoacylate tRNA(Sec) with serine, to form the misacylated tRNA L-seryl-tRNA(Sec), which will be further converted into selenocysteinyl-tRNA(Sec). The sequence is that of Serine--tRNA ligase from Akkermansia muciniphila (strain ATCC BAA-835 / DSM 22959 / JCM 33894 / BCRC 81048 / CCUG 64013 / CIP 107961 / Muc).